A 143-amino-acid chain; its full sequence is Ribulose bisphosphate carboxylase large chain (143 aa).

The propeptide occupies 1–2; that stretch reads MS. Residue Pro-3 is modified to N-acetylproline. Lys-14 is modified (N6,N6,N6-trimethyllysine). Xaa-123 provides a ligand contact to substrate.

The protein belongs to the RuBisCO large chain family. Type I subfamily. In terms of assembly, heterohexadecamer of 8 large chains and 8 small chains.

It localises to the plastid. Its subcellular location is the chloroplast. It carries out the reaction 2 (2R)-3-phosphoglycerate + 2 H(+) = D-ribulose 1,5-bisphosphate + CO2 + H2O. It catalyses the reaction D-ribulose 1,5-bisphosphate + O2 = 2-phosphoglycolate + (2R)-3-phosphoglycerate + 2 H(+). Functionally, ruBisCO catalyzes two reactions: the carboxylation of D-ribulose 1,5-bisphosphate, the primary event in carbon dioxide fixation, as well as the oxidative fragmentation of the pentose substrate in the photorespiration process. Both reactions occur simultaneously and in competition at the same active site. The sequence is that of Ribulose bisphosphate carboxylase large chain (rbcL) from Nemopanthus mucronatus (Catberry).